A 249-amino-acid chain; its full sequence is 1-(5-phosphoribosyl)-5-[(5-phosphoribosylamino)methylideneamino] imidazole-4-carboxamide isomerase (249 aa).

D11 functions as the Proton acceptor in the catalytic mechanism. The active-site Proton donor is D132.

It belongs to the HisA/HisF family.

It is found in the cytoplasm. It carries out the reaction 1-(5-phospho-beta-D-ribosyl)-5-[(5-phospho-beta-D-ribosylamino)methylideneamino]imidazole-4-carboxamide = 5-[(5-phospho-1-deoxy-D-ribulos-1-ylimino)methylamino]-1-(5-phospho-beta-D-ribosyl)imidazole-4-carboxamide. The protein operates within amino-acid biosynthesis; L-histidine biosynthesis; L-histidine from 5-phospho-alpha-D-ribose 1-diphosphate: step 4/9. In Nitrobacter winogradskyi (strain ATCC 25391 / DSM 10237 / CIP 104748 / NCIMB 11846 / Nb-255), this protein is 1-(5-phosphoribosyl)-5-[(5-phosphoribosylamino)methylideneamino] imidazole-4-carboxamide isomerase.